The chain runs to 453 residues: tRNA modification GTPase MnmE (453 aa).

3 residues coordinate (6S)-5-formyl-5,6,7,8-tetrahydrofolate: Arg-22, Glu-79, and Lys-119. Residues 215–376 (GMKVVIAGRP…LKQHLKSLMG (162 aa)) enclose the TrmE-type G domain. Asn-225 contributes to the K(+) binding site. GTP contacts are provided by residues 225-230 (NAGKSS), 244-250 (TDIAGTT), 269-272 (DTAG), and 334-337 (NKAD). Ser-229 lines the Mg(2+) pocket. K(+) contacts are provided by Thr-244, Ile-246, and Thr-249. Thr-250 is a Mg(2+) binding site. Position 453 (Lys-453) interacts with (6S)-5-formyl-5,6,7,8-tetrahydrofolate.

This sequence belongs to the TRAFAC class TrmE-Era-EngA-EngB-Septin-like GTPase superfamily. TrmE GTPase family. As to quaternary structure, homodimer. Heterotetramer of two MnmE and two MnmG subunits. The cofactor is K(+).

It localises to the cytoplasm. Exhibits a very high intrinsic GTPase hydrolysis rate. Involved in the addition of a carboxymethylaminomethyl (cmnm) group at the wobble position (U34) of certain tRNAs, forming tRNA-cmnm(5)s(2)U34. The sequence is that of tRNA modification GTPase MnmE from Shewanella amazonensis (strain ATCC BAA-1098 / SB2B).